The chain runs to 27 residues: Endoglucanase gh5 (27 aa).

The Nucleophile role is filled by glutamate 6.

It carries out the reaction Endohydrolysis of (1-&gt;4)-beta-D-glucosidic linkages in cellulose, lichenin and cereal beta-D-glucans.. Activity is stimulated by zinc ions, potassium ions and DTT. Activity is inhibited by manganese and chloride ions. Its function is as follows. Endoglucanase (EG) that cleaves the internal beta-1,4-glucosidic bonds in cellulose. The protein is Endoglucanase gh5 of Fomes meliae (Fomitopsis meliae).